The following is a 118-amino-acid chain: Large ribosomal subunit protein uL18 (118 aa).

This sequence belongs to the universal ribosomal protein uL18 family. As to quaternary structure, part of the 50S ribosomal subunit; part of the 5S rRNA/L5/L18/L25 subcomplex. Contacts the 5S and 23S rRNAs.

Its function is as follows. This is one of the proteins that bind and probably mediate the attachment of the 5S RNA into the large ribosomal subunit, where it forms part of the central protuberance. This Nitratiruptor sp. (strain SB155-2) protein is Large ribosomal subunit protein uL18.